The sequence spans 418 residues: Histidinol dehydrogenase (418 aa).

Positions 119, 180, and 203 each coordinate NAD(+). Substrate is bound by residues Thr226, Gln248, and His251. Zn(2+) is bound by residues Gln248 and His251. Active-site proton acceptor residues include Glu316 and His317. Substrate is bound by residues His317, Asp350, Glu404, and His409. Asp350 is a binding site for Zn(2+). Zn(2+) is bound at residue His409.

The protein belongs to the histidinol dehydrogenase family. The cofactor is Zn(2+).

The catalysed reaction is L-histidinol + 2 NAD(+) + H2O = L-histidine + 2 NADH + 3 H(+). The protein operates within amino-acid biosynthesis; L-histidine biosynthesis; L-histidine from 5-phospho-alpha-D-ribose 1-diphosphate: step 9/9. Functionally, catalyzes the sequential NAD-dependent oxidations of L-histidinol to L-histidinaldehyde and then to L-histidine. This Staphylococcus aureus (strain MSSA476) protein is Histidinol dehydrogenase.